A 313-amino-acid polypeptide reads, in one-letter code: Formimidoylglutamase (313 aa).

Mn(2+) is bound by residues His130, Asp155, His157, Asp159, Asp241, and Asp243.

Belongs to the arginase family. Requires Mn(2+) as cofactor.

The catalysed reaction is N-formimidoyl-L-glutamate + H2O = formamide + L-glutamate. It participates in amino-acid degradation; L-histidine degradation into L-glutamate; L-glutamate from N-formimidoyl-L-glutamate (hydrolase route): step 1/1. Functionally, catalyzes the conversion of N-formimidoyl-L-glutamate to L-glutamate and formamide. This Salmonella heidelberg (strain SL476) protein is Formimidoylglutamase.